Here is a 449-residue protein sequence, read N- to C-terminus: MIQIKLHNTKTRRREPFAPADPAHVKLYVCGPTVYDRAHLGNARTVVVFDTLVRLLRHLFPRVTYVRNITDIDDKINARAAETGETIGEITARTTSWFHEDMAALYCAPPDIEPRATGHIGDIIALIERLIARGHAYAAEGHVLFAVATDAEYGKFSGRSPEELLAGARVDVATYKRDPGDFVLWKPSPPDLPGWDSPWGRGRPGWHIECSAMIHATLGETIDIHGGGADLIFPHHENEIAQSCCAFPGSEFARVWVHAGMLQVDGQKMSKSLGNFRTVQDVLGEAPGEAVRFLLLKTHYRGVLDFSTAALAEAKRELDRFYRALEKHADPAPAATPPAAFIEALADDLNTPGAIAELHALADAAMQGDAASAAGLRAAGMLIGIFNHTADQWFRGEATDDARIDALIAERLAARRNKDFARADAIRAELAAAGILLEDGPGGTTWRRA.

Residue C30 participates in Zn(2+) binding. A 'HIGH' region motif is present at residues P32–N42. Zn(2+)-binding residues include C210, H235, and E239. Positions K268–S272 match the 'KMSKS' region motif. Position 271 (K271) interacts with ATP.

The protein belongs to the class-I aminoacyl-tRNA synthetase family. As to quaternary structure, monomer. Requires Zn(2+) as cofactor.

The protein localises to the cytoplasm. It catalyses the reaction tRNA(Cys) + L-cysteine + ATP = L-cysteinyl-tRNA(Cys) + AMP + diphosphate. The sequence is that of Cysteine--tRNA ligase from Acidiphilium cryptum (strain JF-5).